Reading from the N-terminus, the 239-residue chain is Ribosomal RNA small subunit methyltransferase G (239 aa).

S-adenosyl-L-methionine-binding positions include G77, F82, A128–E129, and R146. Residues D215 to K239 form a disordered region.

The protein belongs to the methyltransferase superfamily. RNA methyltransferase RsmG family.

Its subcellular location is the cytoplasm. Its function is as follows. Specifically methylates the N7 position of guanine in position 535 of 16S rRNA. The protein is Ribosomal RNA small subunit methyltransferase G of Staphylococcus saprophyticus subsp. saprophyticus (strain ATCC 15305 / DSM 20229 / NCIMB 8711 / NCTC 7292 / S-41).